A 241-amino-acid chain; its full sequence is Probable transcriptional regulatory protein Rpic_2388 (241 aa).

This sequence belongs to the TACO1 family.

It localises to the cytoplasm. This is Probable transcriptional regulatory protein Rpic_2388 from Ralstonia pickettii (strain 12J).